The sequence spans 251 residues: Probable phosphatase Sputcn32_1369 (251 aa).

Zn(2+) contacts are provided by H8, H10, H16, H41, E74, H102, H132, D193, and H195.

It belongs to the PHP family. It depends on Zn(2+) as a cofactor.

In Shewanella putrefaciens (strain CN-32 / ATCC BAA-453), this protein is Probable phosphatase Sputcn32_1369.